We begin with the raw amino-acid sequence, 396 residues long: Elongation factor Tu 2 (396 aa).

The region spanning 10–206 is the tr-type G domain; it reads KPHVNVGTIG…ALDTYIPTPK (197 aa). A G1 region spans residues 19-26; sequence GHVDHGKT. Position 19 to 26 (19 to 26) interacts with GTP; it reads GHVDHGKT. Residue Thr-26 coordinates Mg(2+). A G2 region spans residues 60-64; it reads GITIS. The tract at residues 81–84 is G3; sequence DCPG. GTP is bound by residues 81-85 and 136-139; these read DCPGH and NKAD. The G4 stretch occupies residues 136-139; the sequence is NKAD. Residues 174–176 are G5; sequence SAL.

Belongs to the TRAFAC class translation factor GTPase superfamily. Classic translation factor GTPase family. EF-Tu/EF-1A subfamily. In terms of assembly, monomer.

It localises to the cytoplasm. It catalyses the reaction GTP + H2O = GDP + phosphate + H(+). GTP hydrolase that promotes the GTP-dependent binding of aminoacyl-tRNA to the A-site of ribosomes during protein biosynthesis. This is Elongation factor Tu 2 from Ruthia magnifica subsp. Calyptogena magnifica.